The sequence spans 578 residues: Potassium-transporting ATPase potassium-binding subunit (578 aa).

The next 11 helical transmembrane spans lie at 3–23 (AAAL…AVPL), 67–87 (AAAA…LERL), 95–115 (PAGL…SFAT), 136–156 (ALTV…AALV), 181–201 (LLLP…VPQT), 264–284 (LEAL…GALV), 291–311 (WTVY…TVSA), 396–416 (GLYG…LMVG), 436–456 (LAIL…CLLP), 504–524 (VAML…AGAF), and 543–563 (LFAG…FLPA).

The protein belongs to the KdpA family. In terms of assembly, the system is composed of three essential subunits: KdpA, KdpB and KdpC.

The protein resides in the cell inner membrane. Part of the high-affinity ATP-driven potassium transport (or Kdp) system, which catalyzes the hydrolysis of ATP coupled with the electrogenic transport of potassium into the cytoplasm. This subunit binds the periplasmic potassium ions and delivers the ions to the membrane domain of KdpB through an intramembrane tunnel. This is Potassium-transporting ATPase potassium-binding subunit from Anaeromyxobacter dehalogenans (strain 2CP-C).